The primary structure comprises 289 residues: Tachykinins (289 aa).

The signal sequence occupies residues 1–24 (MRPLSGLIALALLLLLLLTAPSSA). The tract at residues 24-94 (AADTETESSG…DEEADSSYAE (71 aa)) is disordered. Positions 25-47 (ADTETESSGSPLTPGAEEPRRVV) are excised as a propeptide. Residue R59 is modified to Arginine amide. The segment covering 60 to 69 (GKKDEEHDTS) has biased composition (basic and acidic residues). Asparagine amide is present on N95. R110 carries the arginine amide modification. Valine amide is present on V153. An arginine amide mark is found at R165, R200, R239, and R281. Positions 285–289 (PALFE) are excised as a propeptide.

Belongs to the tachykinin family. As to expression, strong expression is seen in a group of 14 cells plus one isolated cell in the midgut of stage 17 embryos. Also expressed in a pair of medially located unidentified cells, just posterior to the brain, and in two lateral groups of cells that may be associated with tracheae. Expression in the larval gut is restricted to cells with endocrine cell-like morphology in the posterior midgut, just anterior to the malphigian tubules. In the brain, expression is detected in a restricted number of neuronal cell bodies. Expression in the adult female gut is restricted to the midgut with no expression detected in the hindgut.

It is found in the secreted. In terms of biological role, tachykinins are active peptides which excite neurons, evoke behavioral responses, are potent vasodilators and secretagogues, and contract (directly or indirectly) many smooth muscles. Stimulates gut muscle contractions. Required for the response to the male sex pheromone CH503 which is transferred from males to females during mating and inhibits courtship behavior by other males. The Gr68a gustatory receptor is required for detection of the pheromone and Gr68a-expressing neurons in the male foreleg relay signals to the suboesophageal zone (SEZ) which leads to courtship suppression through release of tachykinin from a cluster of 8-10 neurons in the SEZ. This Drosophila melanogaster (Fruit fly) protein is Tachykinins.